Here is a 423-residue protein sequence, read N- to C-terminus: Gamma-glutamyl phosphate reductase (423 aa).

It belongs to the gamma-glutamyl phosphate reductase family.

It is found in the cytoplasm. The catalysed reaction is L-glutamate 5-semialdehyde + phosphate + NADP(+) = L-glutamyl 5-phosphate + NADPH + H(+). It participates in amino-acid biosynthesis; L-proline biosynthesis; L-glutamate 5-semialdehyde from L-glutamate: step 2/2. In terms of biological role, catalyzes the NADPH-dependent reduction of L-glutamate 5-phosphate into L-glutamate 5-semialdehyde and phosphate. The product spontaneously undergoes cyclization to form 1-pyrroline-5-carboxylate. In Burkholderia vietnamiensis (strain G4 / LMG 22486) (Burkholderia cepacia (strain R1808)), this protein is Gamma-glutamyl phosphate reductase.